A 264-amino-acid chain; its full sequence is ATP synthase subunit a (264 aa).

6 helical membrane passes run 32–52, 89–109, 134–154, 177–197, 208–228, and 235–255; these read IDSL…FHSV, VIAP…FMDM, DLNI…YYSI, IPVN…SLAL, LIFI…TLGV, and LIFH…LTIV.

Belongs to the ATPase A chain family. As to quaternary structure, F-type ATPases have 2 components, CF(1) - the catalytic core - and CF(0) - the membrane proton channel. CF(1) has five subunits: alpha(3), beta(3), gamma(1), delta(1), epsilon(1). CF(0) has three main subunits: a(1), b(2) and c(9-12). The alpha and beta chains form an alternating ring which encloses part of the gamma chain. CF(1) is attached to CF(0) by a central stalk formed by the gamma and epsilon chains, while a peripheral stalk is formed by the delta and b chains.

Its subcellular location is the cell inner membrane. Key component of the proton channel; it plays a direct role in the translocation of protons across the membrane. The protein is ATP synthase subunit a of Shewanella piezotolerans (strain WP3 / JCM 13877).